The sequence spans 164 residues: 2S seed storage protein 1 (164 aa).

The first 21 residues, 1–21 (MANKLFLVCAALALCFLLTNA), serve as a signal peptide directing secretion. Propeptides lie at residues 22-37 (SIYRTVVEFEEDDATN), 74-83 (EFDFEDDMEN), and 163-164 (FY).

It belongs to the 2S seed storage albumins family. As to quaternary structure, the mature protein consists of a small and a large chain linked by disulfide bonds.

Functionally, this is a 2S seed storage protein. The sequence is that of 2S seed storage protein 1 (AT2S1) from Arabidopsis thaliana (Mouse-ear cress).